A 209-amino-acid chain; its full sequence is Thymidylate kinase (209 aa).

11–18 lines the ATP pocket; the sequence is GPDGAGKT.

It belongs to the thymidylate kinase family.

It carries out the reaction dTMP + ATP = dTDP + ADP. Its function is as follows. Phosphorylation of dTMP to form dTDP in both de novo and salvage pathways of dTTP synthesis. The protein is Thymidylate kinase of Streptococcus thermophilus (strain ATCC BAA-250 / LMG 18311).